Consider the following 60-residue polypeptide: Conotoxin Cl1.1 (60 aa).

The signal sequence occupies residues Met-1–Ala-19. Positions Val-20 to Gly-48 are excised as a propeptide.

The protein belongs to the conotoxin T superfamily. Post-translationally, contains 2 disulfide bonds. As to expression, expressed by the venom duct.

It localises to the secreted. This is Conotoxin Cl1.1 from Californiconus californicus (California cone).